Consider the following 409-residue polypeptide: Putative protein disulfide-isomerase DDB_G0275025 (409 aa).

Residues 1-21 form the signal peptide; sequence MKLINICIFIFAIICIESTFG. A Thioredoxin domain is found at 28–140; the sequence is NVINLTKKNF…AKFSLAKLPS (113 aa). Cysteines 57 and 60 form a disulfide. Residues 245–273 form a disordered region; that stretch reads SNNDNNNNNNNNNNEESTKTTTTEKDPAS. Residues 247-259 show a composition bias toward low complexity; sequence NDNNNNNNNNNNE. The span at 260–273 shows a compositional bias: basic and acidic residues; it reads ESTKTTTTEKDPAS. Positions 406 to 409 match the Prevents secretion from ER motif; the sequence is KDEL.

It belongs to the protein disulfide isomerase family.

The protein localises to the endoplasmic reticulum lumen. The enzyme catalyses Catalyzes the rearrangement of -S-S- bonds in proteins.. The chain is Putative protein disulfide-isomerase DDB_G0275025 from Dictyostelium discoideum (Social amoeba).